The primary structure comprises 185 residues: Peptidyl-tRNA hydrolase (185 aa).

Tyr-14 serves as a coordination point for tRNA. The Proton acceptor role is filled by His-19. Phe-64, Asn-66, and Asn-112 together coordinate tRNA.

Belongs to the PTH family. Monomer.

Its subcellular location is the cytoplasm. The catalysed reaction is an N-acyl-L-alpha-aminoacyl-tRNA + H2O = an N-acyl-L-amino acid + a tRNA + H(+). In terms of biological role, hydrolyzes ribosome-free peptidyl-tRNAs (with 1 or more amino acids incorporated), which drop off the ribosome during protein synthesis, or as a result of ribosome stalling. Functionally, catalyzes the release of premature peptidyl moieties from peptidyl-tRNA molecules trapped in stalled 50S ribosomal subunits, and thus maintains levels of free tRNAs and 50S ribosomes. The chain is Peptidyl-tRNA hydrolase from Caldanaerobacter subterraneus subsp. tengcongensis (strain DSM 15242 / JCM 11007 / NBRC 100824 / MB4) (Thermoanaerobacter tengcongensis).